The following is a 129-amino-acid chain: Lysozyme C, milk isozyme (129 aa).

Positions 1–129 (KIFSKCELAR…LSKYLASCNL (129 aa)) constitute a C-type lysozyme domain. 4 cysteine pairs are disulfide-bonded: cysteine 6–cysteine 127, cysteine 30–cysteine 115, cysteine 65–cysteine 80, and cysteine 76–cysteine 94. Catalysis depends on residues glutamate 35 and aspartate 53. Residues lysine 82, aspartate 85, asparagine 87, aspartate 90, and aspartate 91 each contribute to the Ca(2+) site.

The protein belongs to the glycosyl hydrolase 22 family. In terms of assembly, monomer. It depends on Ca(2+) as a cofactor.

It carries out the reaction Hydrolysis of (1-&gt;4)-beta-linkages between N-acetylmuramic acid and N-acetyl-D-glucosamine residues in a peptidoglycan and between N-acetyl-D-glucosamine residues in chitodextrins.. In terms of biological role, lysozymes have primarily a bacteriolytic function; those in tissues and body fluids are associated with the monocyte-macrophage system and enhance the activity of immunoagents. The polypeptide is Lysozyme C, milk isozyme (Canis lupus familiaris (Dog)).